A 691-amino-acid chain; its full sequence is Germ cell nuclear acidic protein (691 aa).

The SUMO interaction motif 1 (SIM) signature appears at 22–25 (ILNV). Positions 25-488 (VQSSSDDTSG…GAAKVEKRKT (464 aa)) are disordered. The segment covering 27–36 (SSSDDTSGSS) has biased composition (low complexity). A compositionally biased stretch (polar residues) spans 48–63 (CILNVQSRSGDTSGSS). 3 short sequence motifs (SUMO interaction motif 1 (SIM)) span residues 76-79 (VVVI), 97-100 (LLEI), and 121-124 (IVIS). Residues 86-97 (ECHTHEEKKAKL) show a composition bias toward basic and acidic residues. Acidic residues predominate over residues 124–333 (SDDDNDDDNG…VPDDNSDDLE (210 aa)). Residues 467–488 (GHKKRGPSKKKPGAAKVEKRKT) show a composition bias toward basic residues. The SprT-like domain occupies 522–677 (VQRIYDLFNR…AKCKGSLVMV (156 aa)).

It belongs to the serine-aspartate repeat-containing protein (SDr) family. In terms of assembly, interacts (via SIM domains) with SUMO2; this interaction allows the GCNA recruitment to DPCs sites. Interacts with TOP2A; this interaction allows the resolution of topoisomerase II (TOP2A) DNA-protein cross-links. Expressed in germ cells of the testis (at protein level). Detected in skeletal muscle, liver, kidney, pancreas, heart, lung and brain. Expressed throughout spermatogenesis, from spermatogonia to elongated spermatids, in normal adult testis (at protein level).

It localises to the nucleus. The protein resides in the PML body. The protein localises to the chromosome. May play a role in DNA-protein cross-links (DPCs) clearance through a SUMO-dependent recruitment to sites of DPCs, ensuring the genomic stability by protecting germ cells and early embryos from various sources of damage. Can resolve the topoisomerase II (TOP2A) DPCs. This chain is Germ cell nuclear acidic protein, found in Homo sapiens (Human).